A 150-amino-acid chain; its full sequence is Macrodomain Ter protein (150 aa).

It belongs to the MatP family. In terms of assembly, homodimer.

It is found in the cytoplasm. In terms of biological role, required for spatial organization of the terminus region of the chromosome (Ter macrodomain) during the cell cycle. Prevents early segregation of duplicated Ter macrodomains during cell division. Binds specifically to matS, which is a 13 bp signature motif repeated within the Ter macrodomain. The protein is Macrodomain Ter protein of Salmonella arizonae (strain ATCC BAA-731 / CDC346-86 / RSK2980).